Here is a 380-residue protein sequence, read N- to C-terminus: Kappa-type opioid receptor (380 aa).

Over 1-57 the chain is Extracellular; sequence MESPIQIFRGDPGPTCSPSACLLPNSSSWFPNWAESDSNGSVGSEDQQLESAHISPA. 2 N-linked (GlcNAc...) asparagine glycosylation sites follow: Asn25 and Asn39. A helical membrane pass occupies residues 58–85; the sequence is IPVIITAVYSVVFVVGLVGNSLVMFVII. Residues 86–95 lie on the Cytoplasmic side of the membrane; sequence RYTKMKTATN. The helical transmembrane segment at 96–119 threads the bilayer; that stretch reads IYIFNLALADALVTTTMPFQSAVY. Residues 120–132 are Extracellular-facing; the sequence is LMNSWPFGDVLCK. Cys131 and Cys210 are oxidised to a cystine. The chain crosses the membrane as a helical span at residues 133-154; it reads IVISIDYYNMFTSIFTLTMMSV. The Cytoplasmic segment spans residues 155 to 173; it reads DRYIAVCHPVKALDFRTPL. The helical transmembrane segment at 174 to 196 threads the bilayer; the sequence is KAKIINICIWLLASSVGISAIVL. The Extracellular portion of the chain corresponds to 197-222; the sequence is GGTKVREDVDVIECSLQFPDDEYSWW. The chain crosses the membrane as a helical span at residues 223-247; sequence DLFMKICVFVFAFVIPVLIIIVCYT. Over 248 to 274 the chain is Cytoplasmic; sequence LMILRLKSVRLLSGSREKDRNLRRITK. Residues 275–296 form a helical membrane-spanning segment; sequence LVLVVVAVFIICWTPIHIFILV. Over 297 to 311 the chain is Extracellular; the sequence is EALGSTSHSTAALSS. Residues 312–333 traverse the membrane as a helical segment; that stretch reads YYFCIALGYTNSSLNPVLYAFL. Residues 334 to 380 lie on the Cytoplasmic side of the membrane; sequence DENFKRCFRDFCFPIKMRMERQSTNRVRNTVQDPASMRDVGGMNKPV. A lipid anchor (S-palmitoyl cysteine) is attached at Cys345.

This sequence belongs to the G-protein coupled receptor 1 family. In terms of assembly, interacts with NHERF1. Interacts with GABARAPL1. As to expression, detected in brain (at protein level). Brain (neocortex, hippocampus, amygdala, medial habenula, hypothalamus, locus ceruleus, and parabrachial nucleus).

The protein resides in the cell membrane. G-protein coupled opioid receptor that functions as a receptor for endogenous alpha-neoendorphins and dynorphins, but has low affinity for beta-endorphins. Also functions as a receptor for various synthetic opioids and for the psychoactive diterpene salvinorin A. Ligand binding causes a conformation change that triggers signaling via guanine nucleotide-binding proteins (G proteins) and modulates the activity of down-stream effectors, such as adenylate cyclase. Signaling leads to the inhibition of adenylate cyclase activity. Inhibits neurotransmitter release by reducing calcium ion currents and increasing potassium ion conductance. Plays a role in the perception of pain. Plays a role in mediating reduced physical activity upon treatment with synthetic opioids. Plays a role in the regulation of salivation in response to synthetic opioids. May play a role in arousal and regulation of autonomic and neuroendocrine functions. This is Kappa-type opioid receptor (Oprk1) from Mus musculus (Mouse).